A 128-amino-acid chain; its full sequence is DNA polymerase epsilon subunit 3 (128 aa).

Residues 98–110 (EKKESKASKKDSN) show a composition bias toward basic and acidic residues. Residues 98–128 (EKKESKASKKDSNTAENANASATATAEEAPE) form a disordered region. Residues 111 to 128 (TAENANASATATAEEAPE) are compositionally biased toward low complexity.

In terms of assembly, homodimer. Component of the DNA polymerase epsilon complex consisting of four subunits: the catalytic subunit PolE1/DNApol-epsilon255 and the accessory subunits PolE2/DNApol-epsilon58, Chrac-14/DNApolE3 and PolE4. Component of the chromatin accessibility complex (CHRAC), composed of Chrac-14, Chrac-16, Acf and Iswi. Forms an heterodimer with Chrac-16. The Chrac-14/Chrac-16 heterodimer interacts with Acf (via N-terminus). Interacts directly with Iswi and this interaction is further stabilized by association with Chrac-16. Component of the Ada2a-containing (ATAC) complex composed of at least Ada2a, Atac1, Hcf, Ada3, Gcn5, Mocs2B, Charac-14, Atac3, Atac2, NC2beta and wds. Interacts with cid.

It is found in the nucleus. In terms of biological role, accessory component of the DNA polymerase epsilon complex. Participates in DNA repair and in chromosomal DNA replication. Histone-like protein which promotes nucleosome sliding of ATP-dependent nucleosome remodeling complexes. Part of the chromatin-accessibility complex (CHRAC) which uses energy/ATP to increase the general accessibility of DNA in chromatin. As a heterodimer with Chrac-16, binds DNA and facilitates nucleosome sliding by Acf. Has a role in DNA damage response by preventing cid mislocalization to chromatin. The protein is DNA polymerase epsilon subunit 3 of Drosophila melanogaster (Fruit fly).